Reading from the N-terminus, the 112-residue chain is Nucleoid-associated protein FTM_1023 (112 aa).

The protein belongs to the YbaB/EbfC family. As to quaternary structure, homodimer.

It is found in the cytoplasm. The protein localises to the nucleoid. Binds to DNA and alters its conformation. May be involved in regulation of gene expression, nucleoid organization and DNA protection. The sequence is that of Nucleoid-associated protein FTM_1023 from Francisella tularensis subsp. mediasiatica (strain FSC147).